A 438-amino-acid chain; its full sequence is GTPase Obg (438 aa).

The region spanning 1-159 is the Obg domain; sequence MAFRDVLNIE…RRVRLELRLI (159 aa). The region spanning 160–332 is the OBG-type G domain; it reads ADVGLVGYPN…LRETLFQLLP (173 aa). ATP contacts are provided by residues 166 to 173, 191 to 195, 219 to 222, 285 to 288, and 313 to 315; these read GYPNAGKS, FTTLS, DIPG, NKVE, and SAK. Ser173 and Thr193 together coordinate Mg(2+). Residues 357-435 form the OCT domain; the sequence is IVFREDAPAK…IGTFRFEYFD (79 aa).

It belongs to the TRAFAC class OBG-HflX-like GTPase superfamily. OBG GTPase family. Monomer. Mg(2+) serves as cofactor.

It is found in the cytoplasm. An essential GTPase which binds GTP, GDP and possibly (p)ppGpp with moderate affinity, with high nucleotide exchange rates and a fairly low GTP hydrolysis rate. Plays a role in control of the cell cycle, stress response, ribosome biogenesis and in those bacteria that undergo differentiation, in morphogenesis control. This is GTPase Obg from Deinococcus radiodurans (strain ATCC 13939 / DSM 20539 / JCM 16871 / CCUG 27074 / LMG 4051 / NBRC 15346 / NCIMB 9279 / VKM B-1422 / R1).